A 129-amino-acid polypeptide reads, in one-letter code: Small ribosomal subunit protein uS11 (129 aa).

The protein belongs to the universal ribosomal protein uS11 family. Part of the 30S ribosomal subunit. Interacts with proteins S7 and S18. Binds to IF-3.

Located on the platform of the 30S subunit, it bridges several disparate RNA helices of the 16S rRNA. Forms part of the Shine-Dalgarno cleft in the 70S ribosome. The chain is Small ribosomal subunit protein uS11 from Lysinibacillus sphaericus (strain C3-41).